The following is a 91-amino-acid chain: Putative septation protein SpoVG (91 aa).

The protein belongs to the SpoVG family.

Functionally, could be involved in septation. The sequence is that of Putative septation protein SpoVG from Clostridium botulinum (strain Alaska E43 / Type E3).